Reading from the N-terminus, the 132-residue chain is Sec-independent protein translocase protein TatB (132 aa).

The helical transmembrane segment at phenylalanine 2–glycine 22 threads the bilayer. The tract at residues leucine 86–glycine 132 is disordered. Low complexity predominate over residues serine 103–proline 115. A compositionally biased stretch (polar residues) spans glutamate 117–glycine 132.

The protein belongs to the TatB family. The Tat system comprises two distinct complexes: a TatABC complex, containing multiple copies of TatA, TatB and TatC subunits, and a separate TatA complex, containing only TatA subunits. Substrates initially bind to the TatABC complex, which probably triggers association of the separate TatA complex to form the active translocon.

Its subcellular location is the cell inner membrane. Functionally, part of the twin-arginine translocation (Tat) system that transports large folded proteins containing a characteristic twin-arginine motif in their signal peptide across membranes. Together with TatC, TatB is part of a receptor directly interacting with Tat signal peptides. TatB may form an oligomeric binding site that transiently accommodates folded Tat precursor proteins before their translocation. The sequence is that of Sec-independent protein translocase protein TatB from Shewanella sediminis (strain HAW-EB3).